The following is a 139-amino-acid chain: Acidic phospholipase A2 BpPLA2-TXI (139 aa).

The first 16 residues, 1–16 (MRTLWIMAVLLVGVEG), serve as a signal peptide directing secretion. C44 and C60 form a disulfide bridge. Residues G45 and G47 each contribute to the Ca(2+) site. Residue H63 is part of the active site. Residue D64 coordinates Ca(2+). 3 disulfide bridges follow: C65/C139, C73/C97, and C91/C102.

This sequence belongs to the phospholipase A2 family. Group II subfamily. D49 sub-subfamily. Ca(2+) serves as cofactor. In terms of tissue distribution, expressed by the venom gland.

The protein resides in the secreted. The catalysed reaction is a 1,2-diacyl-sn-glycero-3-phosphocholine + H2O = a 1-acyl-sn-glycero-3-phosphocholine + a fatty acid + H(+). Functionally, PLA2 catalyzes the calcium-dependent hydrolysis of the 2-acyl groups in 3-sn-phosphoglycerides. In Bothrops pauloensis (Neuwied's lancehead), this protein is Acidic phospholipase A2 BpPLA2-TXI.